The following is a 178-amino-acid chain: Prion-like protein doppel (178 aa).

The first 25 residues, 1-25 (MRKHLGGCWLAIVCILLFSQLCSVK), serve as a signal peptide directing secretion. The flexible tail stretch occupies residues 27–50 (RGIKHRIKWNRKVLPSTSQVTEAR). The interval 51-154 (TAEIRPGAFI…KHCDFWLERG (104 aa)) is globular. Disulfide bonds link C94–C147 and C108–C142. N-linked (GlcNAc...) asparagine glycans are attached at residues N98 and N110. The interval 124–141 (KQDNKLYQRVLWQLIREL) is cu(2+) binding. A lipid anchor (GPI-anchor amidated glycine) is attached at G154. The propeptide at 155 to 178 (AGLRVTLDQPMMLCLLVFIWFIVK) is removed in mature form.

Belongs to the prion family. In terms of processing, N-glycosylated. O-glycosylated. Strongly expressed in testis. Detected at low levels in ovary, spleen, kidney and mammary gland.

Its subcellular location is the cell membrane. In terms of biological role, required for normal acrosome reaction and for normal male fertility. Can bind Cu(2+). The polypeptide is Prion-like protein doppel (PRND) (Bos taurus (Bovine)).